The chain runs to 78 residues: Large ribosomal subunit protein bL28 (78 aa).

The protein belongs to the bacterial ribosomal protein bL28 family.

The polypeptide is Large ribosomal subunit protein bL28 (Acaryochloris marina (strain MBIC 11017)).